The chain runs to 210 residues: Urease accessory protein UreE (210 aa).

Residues 144–210 form a disordered region; that stretch reads PEGGAYAAGG…GHAHPHSLAR (67 aa). The span at 156 to 202 shows a compositional bias: basic and acidic residues; that stretch reads HGHDHPHHDHGHDHAHAHAHGTEACDHEHSHDHDCGHHHDHGQDYGH.

This sequence belongs to the UreE family.

It localises to the cytoplasm. Its function is as follows. Involved in urease metallocenter assembly. Binds nickel. Probably functions as a nickel donor during metallocenter assembly. In Paracidovorax citrulli (strain AAC00-1) (Acidovorax citrulli), this protein is Urease accessory protein UreE.